The following is a 229-amino-acid chain: Enolase-phosphatase E1 (229 aa).

Belongs to the HAD-like hydrolase superfamily. MasA/MtnC family. In terms of assembly, monomer. Mg(2+) serves as cofactor.

The catalysed reaction is 5-methylsulfanyl-2,3-dioxopentyl phosphate + H2O = 1,2-dihydroxy-5-(methylsulfanyl)pent-1-en-3-one + phosphate. It functions in the pathway amino-acid biosynthesis; L-methionine biosynthesis via salvage pathway; L-methionine from S-methyl-5-thio-alpha-D-ribose 1-phosphate: step 3/6. It participates in amino-acid biosynthesis; L-methionine biosynthesis via salvage pathway; L-methionine from S-methyl-5-thio-alpha-D-ribose 1-phosphate: step 4/6. Bifunctional enzyme that catalyzes the enolization of 2,3-diketo-5-methylthiopentyl-1-phosphate (DK-MTP-1-P) into the intermediate 2-hydroxy-3-keto-5-methylthiopentenyl-1-phosphate (HK-MTPenyl-1-P), which is then dephosphorylated to form the acireductone 1,2-dihydroxy-3-keto-5-methylthiopentene (DHK-MTPene). This chain is Enolase-phosphatase E1, found in Citrobacter koseri (strain ATCC BAA-895 / CDC 4225-83 / SGSC4696).